The chain runs to 879 residues: Protein translocase subunit SecA (879 aa).

ATP-binding positions include glutamine 87, 105–109, and aspartate 509; that span reads GEGKT. A disordered region spans residues 834 to 879; that stretch reads IAEDSEKLKPITGTKKPKRNDPCPCGSGKKYKNCCGQSGPKKGLLA. Zn(2+) contacts are provided by cysteine 856, cysteine 858, cysteine 867, and cysteine 868.

The protein belongs to the SecA family. In terms of assembly, monomer and homodimer. Part of the essential Sec protein translocation apparatus which comprises SecA, SecYEG and auxiliary proteins SecDF-YajC and YidC. It depends on Zn(2+) as a cofactor.

It localises to the cell inner membrane. The protein localises to the cytoplasm. It catalyses the reaction ATP + H2O + cellular proteinSide 1 = ADP + phosphate + cellular proteinSide 2.. Part of the Sec protein translocase complex. Interacts with the SecYEG preprotein conducting channel. Has a central role in coupling the hydrolysis of ATP to the transfer of proteins into and across the cell membrane, serving as an ATP-driven molecular motor driving the stepwise translocation of polypeptide chains across the membrane. The protein is Protein translocase subunit SecA of Sulfurovum sp. (strain NBC37-1).